A 97-amino-acid chain; its full sequence is Co-chaperonin GroES (97 aa).

It belongs to the GroES chaperonin family. As to quaternary structure, heptamer of 7 subunits arranged in a ring. Interacts with the chaperonin GroEL.

It is found in the cytoplasm. Together with the chaperonin GroEL, plays an essential role in assisting protein folding. The GroEL-GroES system forms a nano-cage that allows encapsulation of the non-native substrate proteins and provides a physical environment optimized to promote and accelerate protein folding. GroES binds to the apical surface of the GroEL ring, thereby capping the opening of the GroEL channel. In Aeromonas hydrophila subsp. hydrophila (strain ATCC 7966 / DSM 30187 / BCRC 13018 / CCUG 14551 / JCM 1027 / KCTC 2358 / NCIMB 9240 / NCTC 8049), this protein is Co-chaperonin GroES.